The chain runs to 346 residues: tRNA N6-adenosine threonylcarbamoyltransferase (346 aa).

Fe cation is bound by residues His110 and His114. Substrate contacts are provided by residues 132–136 (LLSGG), Asp165, Gly178, and Asn274. Asp298 contacts Fe cation.

Belongs to the KAE1 / TsaD family. Fe(2+) is required as a cofactor.

The protein localises to the cytoplasm. The enzyme catalyses L-threonylcarbamoyladenylate + adenosine(37) in tRNA = N(6)-L-threonylcarbamoyladenosine(37) in tRNA + AMP + H(+). Functionally, required for the formation of a threonylcarbamoyl group on adenosine at position 37 (t(6)A37) in tRNAs that read codons beginning with adenine. Is involved in the transfer of the threonylcarbamoyl moiety of threonylcarbamoyl-AMP (TC-AMP) to the N6 group of A37, together with TsaE and TsaB. TsaD likely plays a direct catalytic role in this reaction. The chain is tRNA N6-adenosine threonylcarbamoyltransferase from Borreliella afzelii (strain PKo) (Borrelia afzelii).